The chain runs to 2599 residues: Protein DOP1 homolog (2599 aa).

2 disordered regions span residues 532-571 (EQSG…SDSR) and 595-701 (ASNQ…LDEE). 3 stretches are compositionally biased toward polar residues: residues 534 to 549 (SGGS…NSAS), 595 to 604 (ASNQSVGRQS), and 625 to 636 (ASDTGQQSSSDL). Ser-753 bears the Phosphoserine mark. Over residues 1240-1251 (PRIEIPHKETPL) the composition is skewed to basic and acidic residues. 2 disordered regions span residues 1240-1316 (PRIE…SSSA) and 1347-1368 (TYRL…EQKD). A compositionally biased stretch (polar residues) spans 1264-1282 (QPSQEQPANQPDNSLQYDQ). Residues 1297–1309 (SELRETSIEKEDS) are compositionally biased toward basic and acidic residues. Position 1355 is a phosphothreonine (Thr-1355). Ser-1360, Ser-1363, and Ser-1371 each carry phosphoserine. Residues 1409 to 1442 (CISKTSTDSNISGSHVEQPEQEEETEPGTESTIN) form a disordered region. Residues 1410-1423 (ISKTSTDSNISGSH) show a composition bias toward polar residues. Position 2525 is a phosphoserine (Ser-2525).

This sequence belongs to the DOP1 family.

The protein resides in the golgi apparatus membrane. May be involved in protein traffic between late Golgi and early endosomes. The polypeptide is Protein DOP1 homolog (Drosophila melanogaster (Fruit fly)).